Here is a 284-residue protein sequence, read N- to C-terminus: Pantothenate synthetase (284 aa).

ATP is bound at residue 31–38 (MGNLHAGH). The active-site Proton donor is H38. Residue Q62 participates in (R)-pantoate binding. Q62 is a beta-alanine binding site. 150–153 (GKKD) contributes to the ATP binding site. Position 156 (Q156) interacts with (R)-pantoate. ATP contacts are provided by residues V179 and 187–190 (MSSR).

Belongs to the pantothenate synthetase family. Homodimer.

The protein resides in the cytoplasm. The catalysed reaction is (R)-pantoate + beta-alanine + ATP = (R)-pantothenate + AMP + diphosphate + H(+). Its pathway is cofactor biosynthesis; (R)-pantothenate biosynthesis; (R)-pantothenate from (R)-pantoate and beta-alanine: step 1/1. Functionally, catalyzes the condensation of pantoate with beta-alanine in an ATP-dependent reaction via a pantoyl-adenylate intermediate. In Xanthomonas campestris pv. campestris (strain 8004), this protein is Pantothenate synthetase.